The chain runs to 251 residues: DNA polymerase sliding clamp 2 (251 aa).

This sequence belongs to the PCNA family. As to quaternary structure, heterotrimer. The subunits circularize to form a toroid; DNA passes through its center. Replication factor C (RFC) is required to load the toroid on the DNA.

Its function is as follows. Sliding clamp subunit that acts as a moving platform for DNA processing. Responsible for tethering the catalytic subunit of DNA polymerase and other proteins to DNA during high-speed replication. This chain is DNA polymerase sliding clamp 2, found in Aeropyrum pernix (strain ATCC 700893 / DSM 11879 / JCM 9820 / NBRC 100138 / K1).